The primary structure comprises 186 residues: UPF0301 protein NTHI0415 (186 aa).

Belongs to the UPF0301 (AlgH) family.

This chain is UPF0301 protein NTHI0415, found in Haemophilus influenzae (strain 86-028NP).